Here is a 1315-residue protein sequence, read N- to C-terminus: ESX secretion system protein EccC (1315 aa).

Basic residues predominate over residues 1–11 (MSTVLVRRKER). Residues 1–21 (MSTVLVRRKERRQPPQMPRGE) are disordered. Over 1-40 (MSTVLVRRKERRQPPQMPRGEILLESPPELPEVVTNSFQN) the chain is Cytoplasmic. The chain crosses the membrane as a helical span at residues 41-61 (VLMYLPMAAGSAAMVFTFLNH). Residues 62–64 (RNT) lie on the Extracellular side of the membrane. The chain crosses the membrane as a helical span at residues 65–85 (LQLVAGGMFALSMFGMMFGQL). At 86–1315 (SQQSGERKTK…RLIQTAYRES (1230 aa)) the chain is on the cytoplasmic side. FtsK domains are found at residues 456–656 (GRPL…MESR) and 813–1004 (RDPY…YESE). Residue 479–486 (GATGSGKS) participates in ATP binding. The active site involves glutamate 593. The binds EsxB stretch occupies residues 721–1315 (RPQVVEQPQP…RLIQTAYRES (595 aa)). ATP contacts are provided by residues 834 to 839 (QTGKST), threonine 1031, 1119 to 1124 (ECGKSN), glutamine 1293, and 1310 to 1311 (TA). The 184-residue stretch at 1099–1282 (LSPVYLDFNT…MSGNKDEGIL (184 aa)) folds into the FtsK 3 domain.

The cytosolic domain can form homodimers. Binds EsxB, which leads to multimerization, however EsxA disassembles the multimers, possibly by making EccC-EsxA-EsxB trimers instead of EccC-EsxB-EsxB-EccC tetramers. Forms a complex with EsxA and EsxB, probably wholly mediated by EsxB.

It localises to the cell membrane. EsxB binding to the third FtsK domain causes multimerization; a subsequent unknown step relieves the allosteric inhibition of linker 2 on FtsK domain 1, activating the ATPase activity; a mutant EsxB ('Ala-98') does not cause multimers to form. Functionally, part of the ESX specialized secretion system, which exports proteins from the cell including EsxA (ESAT-6) and EsxB (CFP-10). Has weak intrinsic ATPase activity; probably only the first FtsK domain can hydrolyze ATP. Might be the translocase subunit. The chain is ESX secretion system protein EccC from Thermomonospora curvata (strain ATCC 19995 / DSM 43183 / JCM 3096 / KCTC 9072 / NBRC 15933 / NCIMB 10081 / Henssen B9).